A 397-amino-acid chain; its full sequence is Dimethyladenosine transferase 2, mitochondrial (397 aa).

The transit peptide at 1–44 (MRGLAMRLPPRLALSVLAGRGPSCILGSGAATRKDWQERNRRSF) directs the protein to the mitochondrion. S-adenosyl-L-methionine-binding residues include I75, E124, and D150. The segment at 329–330 (KR) is DNA-binding.

This sequence belongs to the class I-like SAM-binding methyltransferase superfamily. rRNA adenine N(6)-methyltransferase family. KsgA subfamily. In terms of assembly, homodimer. Component of the mitochondrial transcription initiation complex, composed at least of TFB2M, TFAM and POLRMT. In this complex TFAM recruits POLRMT to the promoter whereas TFB2M induces structural changes in POLRMT to enable promoter opening and trapping of the DNA non-template strand. Interacts with mitochondrial RNA polymerase POLRMT. Interacts with TFAM.

It localises to the mitochondrion. It catalyses the reaction adenosine in rRNA + S-adenosyl-L-methionine = N(6)-methyladenosine in rRNA + S-adenosyl-L-homocysteine + H(+). In terms of biological role, S-adenosyl-L-methionine-dependent rRNA methyltransferase which may methylate two specific adjacent adenosines in the loop of a conserved hairpin near the 3'-end of 12S mitochondrial rRNA. Component of the mitochondrial transcription initiation complex, composed at least of TFB2M, TFAM and POLRMT that is required for basal transcription of mitochondrial DNA. In this complex TFAM recruits POLRMT to a specific promoter whereas TFB2M induces structural changes in POLRMT to enable promoter opening and trapping of the DNA non-template strand. Stimulates transcription independently of the methyltransferase activity. The protein is Dimethyladenosine transferase 2, mitochondrial of Rattus norvegicus (Rat).